The primary structure comprises 383 residues: MMLLKRCNRRALVALAAVLLLAACGGARELPDLSDVGDGVATETLWTASTGSGSASSAYALVPAVEGGRVYAADSNGRVTAWDAESGERLWRVDTGRELAAGPGAGGGLVLVGARDGRLLALDAENGEERWVSGLSSEILAVPQIARNIVVARSGDGRVYGLDGLTGRRLWIHDRSVPVLTLRGSSSPVVVGNRVVVGQDNGRLVTLNLQDGEVIWEAPVSIPRGRSDLERMVDLHADPLVFRGVAYAQAYQGELAAVGMGDGRERWSRDIPGHTGMAADSRQLYVVDDQSRLWALDRNNGATVWRQDRLQGLRLTAPVVIGGHLVLADEEGYLNWIAPDNGDLVGRDRHGRQPIQRPPVPDGDVLYLLSADGRLAALRLVED.

The N-terminal stretch at 1 to 23 is a signal peptide; the sequence is MMLLKRCNRRALVALAAVLLLAA. Cysteine 24 carries N-palmitoyl cysteine lipidation. Cysteine 24 is lipidated: S-diacylglycerol cysteine.

This sequence belongs to the BamB family. As to quaternary structure, part of the Bam complex.

It localises to the cell outer membrane. Its function is as follows. Part of the outer membrane protein assembly complex, which is involved in assembly and insertion of beta-barrel proteins into the outer membrane. This chain is Outer membrane protein assembly factor BamB, found in Alkalilimnicola ehrlichii (strain ATCC BAA-1101 / DSM 17681 / MLHE-1).